The chain runs to 780 residues: Vezatin (780 aa).

2 helical membrane passes run alanine 140–phenylalanine 160 and threonine 162–isoleucine 182. The stretch at valine 430 to alanine 467 forms a coiled coil. 2 disordered regions span residues aspartate 620–threonine 718 and glutamine 757–lysine 780. Positions serine 624–alanine 643 are enriched in polar residues. Composition is skewed to basic and acidic residues over residues glutamate 647–tyrosine 663 and threonine 690–alanine 699. Over residues proline 702–alanine 711 the composition is skewed to low complexity. Over residues phenylalanine 761 to lysine 780 the composition is skewed to acidic residues.

The protein belongs to the vezatin family. Interacts with USH2A (via the cytoplasmic region); the interaction associates VEZT with the USH2 complex at the stereocilia base. Interacts with myosin MYO7A and the cadherin-catenins complex. In terms of tissue distribution, expressed in developing cochlear hair cells. Isoform 1, isoform 2 and isoform 3 are expressed in testis. In the seminiferous epithelium, present exclusively in the acrosome of spermatids (at protein level).

Its subcellular location is the cell membrane. The protein localises to the cell projection. It localises to the stereocilium membrane. It is found in the cell junction. The protein resides in the adherens junction. Its subcellular location is the nucleus. The protein localises to the cytoplasmic vesicle. It localises to the secretory vesicle. It is found in the acrosome. In terms of biological role, plays a pivotal role in the establishment of adherens junctions and their maintenance in adult life. Required for morphogenesis of the preimplantation embryo, and for the implantation process. The polypeptide is Vezatin (Mus musculus (Mouse)).